The following is a 574-amino-acid chain: Protein SIX6OS1 (574 aa).

The disordered stretch occupies residues 259–313 (KDEQVSNRSSQNSQLLLPCESQKFVRNMNSSEARVTDKKEESSANQSKFVRSDVR). The span at 264–275 (SNRSSQNSQLLL) shows a compositional bias: low complexity. Residue threonine 427 is modified to Phosphothreonine. Serine 430 is modified (phosphoserine). Positions 549–574 (QDPSTMTSSSSKDFSSSQNKTQFMFF) are disordered. Positions 552–565 (STMTSSSSKDFSSS) are enriched in low complexity.

As to quaternary structure, interacts with SYCE1. Interacts with proteasome subunit PSMA8; to participate in meiosis progression during spermatogenesis. In terms of tissue distribution, most abundantly expressed in testis. Also expressed in retina and skeletal muscle.

It is found in the chromosome. Meiotic protein that localizes to the central element of the synaptonemal complex and is required for chromosome synapsis during meiotic recombination. Required for the appropriate processing of intermediate recombination nodules before crossover formation. The chain is Protein SIX6OS1 (Six6os1) from Mus musculus (Mouse).